The chain runs to 99 residues: Citrate lyase acyl carrier protein (99 aa).

Serine 14 bears the O-(phosphoribosyl dephospho-coenzyme A)serine mark.

It belongs to the CitD family. Oligomer with a subunit composition of (alpha,beta,gamma)6.

The protein localises to the cytoplasm. Covalent carrier of the coenzyme of citrate lyase. The polypeptide is Citrate lyase acyl carrier protein (Edwardsiella ictaluri (strain 93-146)).